We begin with the raw amino-acid sequence, 831 residues long: Periplasmic nitrate reductase (831 aa).

The tat-type signal signal peptide spans 1–29 (MKVSRRDFIKQTAIAATASVAGIPLGTEA). The 4Fe-4S Mo/W bis-MGD-type domain occupies 41-97 (LKWSKAPCRFCGTGCGVTVAVRDNKVVATQGDPQCEVNKGLNCVKGYFLSKIMYGQD). [4Fe-4S] cluster contacts are provided by cysteine 48, cysteine 51, cysteine 55, and cysteine 83. Mo-bis(molybdopterin guanine dinucleotide) contacts are provided by residues lysine 85, glutamine 152, asparagine 177, cysteine 181, 214–221 (WGSNMAEM), 245–249 (STFTH), 264–266 (QTD), methionine 375, glutamine 379, asparagine 485, 511–512 (SD), lysine 534, aspartate 561, and 721–730 (TGRVLEHWHS). Residue tryptophan 797 participates in substrate binding. The Mo-bis(molybdopterin guanine dinucleotide) site is built by asparagine 805 and lysine 822.

The protein belongs to the prokaryotic molybdopterin-containing oxidoreductase family. NasA/NapA/NarB subfamily. Component of the periplasmic nitrate reductase NapAB complex composed of NapA and NapB. [4Fe-4S] cluster is required as a cofactor. Requires Mo-bis(molybdopterin guanine dinucleotide) as cofactor. Predicted to be exported by the Tat system. The position of the signal peptide cleavage has not been experimentally proven.

The protein resides in the periplasm. It catalyses the reaction 2 Fe(II)-[cytochrome] + nitrate + 2 H(+) = 2 Fe(III)-[cytochrome] + nitrite + H2O. In terms of biological role, catalytic subunit of the periplasmic nitrate reductase complex NapAB. Receives electrons from NapB and catalyzes the reduction of nitrate to nitrite. The sequence is that of Periplasmic nitrate reductase from Cupriavidus pinatubonensis (strain JMP 134 / LMG 1197) (Cupriavidus necator (strain JMP 134)).